The chain runs to 123 residues: Large ribosomal subunit protein uL14c (123 aa).

The protein belongs to the universal ribosomal protein uL14 family. As to quaternary structure, part of the 50S ribosomal subunit.

The protein localises to the plastid. The protein resides in the chloroplast. In terms of biological role, binds to 23S rRNA. The chain is Large ribosomal subunit protein uL14c from Oryza nivara (Indian wild rice).